The chain runs to 151 residues: Peptide methionine sulfoxide reductase MsrB (151 aa).

The MsrB domain occupies D9 to F132. The active-site Nucleophile is the C121.

Belongs to the MsrB Met sulfoxide reductase family.

The enzyme catalyses L-methionyl-[protein] + [thioredoxin]-disulfide + H2O = L-methionyl-(R)-S-oxide-[protein] + [thioredoxin]-dithiol. The chain is Peptide methionine sulfoxide reductase MsrB from Mycoplasma pneumoniae (strain ATCC 29342 / M129 / Subtype 1) (Mycoplasmoides pneumoniae).